The following is a 110-amino-acid chain: Nucleotide-binding protein in fmt 3'region (110 aa).

Residue 8–15 participates in ATP binding; sequence GLSGAGKT. 57 to 60 contributes to the GTP binding site; it reads DARA.

The protein belongs to the RapZ-like family.

Displays ATPase and GTPase activities. This is Nucleotide-binding protein in fmt 3'region from Thermus thermophilus.